A 228-amino-acid polypeptide reads, in one-letter code: 7-cyano-7-deazaguanine synthase (228 aa).

Residue L9 to L19 coordinates ATP. Zn(2+) is bound by residues C193, C203, C206, and C209.

Belongs to the QueC family. It depends on Zn(2+) as a cofactor.

The catalysed reaction is 7-carboxy-7-deazaguanine + NH4(+) + ATP = 7-cyano-7-deazaguanine + ADP + phosphate + H2O + H(+). It functions in the pathway purine metabolism; 7-cyano-7-deazaguanine biosynthesis. Catalyzes the ATP-dependent conversion of 7-carboxy-7-deazaguanine (CDG) to 7-cyano-7-deazaguanine (preQ(0)). The sequence is that of 7-cyano-7-deazaguanine synthase from Rickettsia conorii (strain ATCC VR-613 / Malish 7).